The following is a 424-amino-acid chain: Protein shisa-9 (424 aa).

The signal sequence occupies residues 1–23 (MRRVLRLLLGCFLTELCARMCRA). Topologically, residues 24-149 (QERSGHGQLA…DPLHDPTKDK (126 aa)) are extracellular. N-linked (GlcNAc...) asparagine glycosylation is found at asparagine 45, asparagine 89, and asparagine 116. The chain crosses the membrane as a helical span at residues 150-170 (TNLIVYIICGVVAVMVLVGIF). Over 171 to 424 (TKLGLEKAHR…ITNSKTEVTV (254 aa)) the chain is Cytoplasmic. Disordered stretches follow at residues 333 to 373 (PRAF…TWDP) and 389 to 424 (LGIAESGSCDPLGTRTQHFPPTQPYFITNSKTEVTV). Composition is skewed to polar residues over residues 362 to 373 (YNSTANFKTWDP) and 402 to 424 (TRTQHFPPTQPYFITNSKTEVTV).

It belongs to the shisa family. SHISA9 subfamily. In terms of assembly, component of some AMPA receptors (ionotropic glutamate receptors) complex, at least composed of some AMPA receptor (GRIA1, GRIA2 and/or GRIA3), CACNG2 and SHISA9, as well as low level of DLG4. In terms of tissue distribution, brain-specific. Mainly expressed in neurons, including in hippocampus, cerebral cortex, striatum, thalamus, olfactory bulb and cerebellum. Expressed in most brain structures during embryonic and postnatal development.

The protein localises to the cell projection. The protein resides in the dendritic spine membrane. It localises to the synapse. Functionally, regulator of short-term neuronal synaptic plasticity in the dentate gyrus. Associates with AMPA receptors (ionotropic glutamate receptors) in synaptic spines and promotes AMPA receptor desensitization at excitatory synapses. The polypeptide is Protein shisa-9 (Shisa9) (Mus musculus (Mouse)).